We begin with the raw amino-acid sequence, 227 residues long: Holin (227 aa).

The Cytoplasmic portion of the chain corresponds to 1–33; it reads MVLVRGGYKLEKFLQLLTVLLQEAKDPASLLKR. The chain crosses the membrane as a helical; Signal-anchor for type II membrane protein span at residues 34 to 48; sequence LLTILVAVIIFLFVS. The Periplasmic portion of the chain corresponds to 49–227; sequence NTSEVMSFLK…PQQRSLGRSI (179 aa). An intrachain disulfide couples cysteine 178 to cysteine 216.

The protein belongs to the T4likevirus holin family. In terms of assembly, homomultimer. Heterotetramer composed of 2 holin and 2 antiholin. The holin-antiholin complex binds dsDNA. Interacts (via C-terminus) with antiholin (via C-terminus); this interaction blocks the holin homomultimerization and delays host cell lysis. Interacts (via N-terminus) with the lysis inhibition accessory protein rIII; this interaction stabilizes the holin-antiholin complex thereby resulting in a robust block of the hole formation. In terms of processing, disulfide bond is required for functionality.

The protein localises to the host cell inner membrane. Functionally, accumulates harmlessly in the cytoplasmic membrane until it reaches a critical concentration that triggers the formation of micron-scale pores (holes) causing host cell membrane disruption and endolysin escape into the periplasmic space. Determines the precise timing of host cell lysis. Regulated by specific antiholins that somehow sense superinfections and then delay lysis. Participates with the endolysin and spanin proteins in the sequential events which lead to the programmed host cell lysis releasing the mature viral particles from the host cell. This Escherichia phage T5 (Enterobacteria phage T5) protein is Holin.